Here is a 71-residue protein sequence, read N- to C-terminus: Omega-conotoxin-like CnVIIF (71 aa).

3 cysteine pairs are disulfide-bonded: Cys-46–Cys-61, Cys-53–Cys-65, and Cys-60–Cys-70. Cys-70 is modified (cysteine amide; in CnVIID).

The protein belongs to the conotoxin M superfamily. Expressed by the venom duct.

The protein localises to the secreted. Functionally, omega-conotoxins act at presynaptic membranes, they bind and block voltage-gated calcium channels (Cav). This is Omega-conotoxin-like CnVIIF from Conus consors (Singed cone).